A 394-amino-acid polypeptide reads, in one-letter code: 8-amino-7-oxononanoate synthase (394 aa).

Arginine 21 contributes to the substrate binding site. 112 to 113 (GY) lines the pyridoxal 5'-phosphate pocket. Histidine 137 lines the substrate pocket. Pyridoxal 5'-phosphate contacts are provided by serine 183, histidine 211, and threonine 239. N6-(pyridoxal phosphate)lysine is present on lysine 242. Threonine 358 contributes to the substrate binding site.

It belongs to the class-II pyridoxal-phosphate-dependent aminotransferase family. BioF subfamily. Homodimer. It depends on pyridoxal 5'-phosphate as a cofactor.

The catalysed reaction is 6-carboxyhexanoyl-[ACP] + L-alanine + H(+) = (8S)-8-amino-7-oxononanoate + holo-[ACP] + CO2. It functions in the pathway cofactor biosynthesis; biotin biosynthesis. In terms of biological role, catalyzes the decarboxylative condensation of pimeloyl-[acyl-carrier protein] and L-alanine to produce 8-amino-7-oxononanoate (AON), [acyl-carrier protein], and carbon dioxide. This chain is 8-amino-7-oxononanoate synthase, found in Burkholderia pseudomallei (strain K96243).